The sequence spans 210 residues: Imidazoleglycerol-phosphate dehydratase (210 aa).

Residues M1–T23 form a disordered region.

This sequence belongs to the imidazoleglycerol-phosphate dehydratase family.

Its subcellular location is the cytoplasm. It carries out the reaction D-erythro-1-(imidazol-4-yl)glycerol 3-phosphate = 3-(imidazol-4-yl)-2-oxopropyl phosphate + H2O. It participates in amino-acid biosynthesis; L-histidine biosynthesis; L-histidine from 5-phospho-alpha-D-ribose 1-diphosphate: step 6/9. The protein is Imidazoleglycerol-phosphate dehydratase of Thermosynechococcus vestitus (strain NIES-2133 / IAM M-273 / BP-1).